The primary structure comprises 407 residues: Histone-lysine N-methyltransferase SUV39H2 (407 aa).

The Chromo domain maps to 43–101 (YEVEYLCDYKVEEGKEYYLVKWKGWPESSNTWEPQKNLKCPKLLENFLSDKDEYLSRMK). In terms of domain architecture, Pre-SET spans 185–243 (TGCECSDCPAEKCCPKEAGFILAYNKQKKLKIQPGLPIYECNSFCRCGPDCPNRIVQKG). Residues C187, C189, C192, C197, C198, C225, C229, C231, and C235 each coordinate Zn(2+). One can recognise an SET domain in the interval 246–369 (YSLCIFRTNN…AGEELTFDYQ (124 aa)). S-adenosyl-L-methionine contacts are provided by residues 257–259 (RGW), Y300, and 326–327 (NH). 4 residues coordinate Zn(2+): C329, C395, C397, and C402. The 17-residue stretch at 391-407 (IRTVCKCGAVCCRGYLN) folds into the Post-SET domain.

Belongs to the class V-like SAM-binding methyltransferase superfamily. Histone-lysine methyltransferase family. Suvar3-9 subfamily.

The protein resides in the nucleus. Its subcellular location is the chromosome. It is found in the centromere. It catalyses the reaction L-lysyl(9)-[histone H3] + 3 S-adenosyl-L-methionine = N(6),N(6),N(6)-trimethyl-L-lysyl(9)-[histone H3] + 3 S-adenosyl-L-homocysteine + 3 H(+). In terms of biological role, histone methyltransferase that specifically trimethylates 'Lys-9' of histone H3 using monomethylated H3 'Lys-9' as substrate. H3 'Lys-9' trimethylation represents a specific tag for epigenetic transcriptional repression by recruiting HP1 (CBX1, CBX3 and/or CBX5) proteins to methylated histones. Mainly functions in heterochromatin regions, thereby playing a central role in the establishment of constitutive heterochromatin at pericentric and telomere regions. H3 'Lys-9' trimethylation is also required to direct DNA methylation at pericentric repeats. SUV39H1 is targeted to histone H3 via its interaction with RB1 and is involved in many processes. In Gallus gallus (Chicken), this protein is Histone-lysine N-methyltransferase SUV39H2 (SUV39H2).